The sequence spans 422 residues: Histidine--tRNA ligase (422 aa).

The protein belongs to the class-II aminoacyl-tRNA synthetase family. As to quaternary structure, homodimer.

It is found in the cytoplasm. The enzyme catalyses tRNA(His) + L-histidine + ATP = L-histidyl-tRNA(His) + AMP + diphosphate + H(+). In Mycolicibacterium vanbaalenii (strain DSM 7251 / JCM 13017 / BCRC 16820 / KCTC 9966 / NRRL B-24157 / PYR-1) (Mycobacterium vanbaalenii), this protein is Histidine--tRNA ligase.